A 274-amino-acid chain; its full sequence is Proto-oncogene FRAT1 (274 aa).

4 disordered regions span residues 1 to 24 (MPCR…DDSF), 55 to 107 (AHDR…PGAV), 132 to 194 (GASA…DDPH), and 232 to 274 (GPLS…VPGS). The segment covering 7–23 (EEEEAGDEAEGEEDDDS) has biased composition (acidic residues). The segment at 191-214 (DDPHRLLQQLVLSGNLIKEAVRRL) is involved in GSK-3 binding. Residues S243 and S246 each carry the phosphoserine modification.

Belongs to the GSK-3-binding protein family. As to quaternary structure, binds DVL1. Binds GSK-3 and prevent GSK-3-dependent phosphorylation. In terms of processing, phosphorylated. Highly expressed in testis. Lower level of expression in spleen, thymus and brain.

The protein localises to the cytoplasm. Functionally, positively regulates the Wnt signaling pathway by stabilizing beta-catenin through the association with GSK-3. May play a role in tumor progression and collaborate with PIM1 and MYC in lymphomagenesis. The protein is Proto-oncogene FRAT1 (Frat1) of Mus musculus (Mouse).